Reading from the N-terminus, the 132-residue chain is Small ribosomal subunit protein uS8 (132 aa).

This sequence belongs to the universal ribosomal protein uS8 family. In terms of assembly, part of the 30S ribosomal subunit. Contacts proteins S5 and S12.

In terms of biological role, one of the primary rRNA binding proteins, it binds directly to 16S rRNA central domain where it helps coordinate assembly of the platform of the 30S subunit. This Leuconostoc mesenteroides subsp. mesenteroides (strain ATCC 8293 / DSM 20343 / BCRC 11652 / CCM 1803 / JCM 6124 / NCDO 523 / NBRC 100496 / NCIMB 8023 / NCTC 12954 / NRRL B-1118 / 37Y) protein is Small ribosomal subunit protein uS8.